A 72-amino-acid chain; its full sequence is Translation initiation factor IF-1 (72 aa).

One can recognise an S1-like domain in the interval 2–72 (AKDDVIEVDG…TRGRITYRFK (71 aa)).

Belongs to the IF-1 family. As to quaternary structure, component of the 30S ribosomal translation pre-initiation complex which assembles on the 30S ribosome in the order IF-2 and IF-3, IF-1 and N-formylmethionyl-tRNA(fMet); mRNA recruitment can occur at any time during PIC assembly.

It localises to the cytoplasm. Functionally, one of the essential components for the initiation of protein synthesis. Stabilizes the binding of IF-2 and IF-3 on the 30S subunit to which N-formylmethionyl-tRNA(fMet) subsequently binds. Helps modulate mRNA selection, yielding the 30S pre-initiation complex (PIC). Upon addition of the 50S ribosomal subunit IF-1, IF-2 and IF-3 are released leaving the mature 70S translation initiation complex. The sequence is that of Translation initiation factor IF-1 from Lactococcus lactis subsp. lactis (strain IL1403) (Streptococcus lactis).